The following is a 98-amino-acid chain: Large ribosomal subunit protein uL23 (98 aa).

This sequence belongs to the universal ribosomal protein uL23 family. In terms of assembly, part of the 50S ribosomal subunit. Contacts protein L29, and trigger factor when it is bound to the ribosome.

Its function is as follows. One of the early assembly proteins it binds 23S rRNA. One of the proteins that surrounds the polypeptide exit tunnel on the outside of the ribosome. Forms the main docking site for trigger factor binding to the ribosome. The chain is Large ribosomal subunit protein uL23 from Rickettsia akari (strain Hartford).